A 463-amino-acid chain; its full sequence is Argininosuccinate lyase (463 aa).

It belongs to the lyase 1 family. Argininosuccinate lyase subfamily.

The protein localises to the cytoplasm. It catalyses the reaction 2-(N(omega)-L-arginino)succinate = fumarate + L-arginine. It participates in amino-acid biosynthesis; L-arginine biosynthesis; L-arginine from L-ornithine and carbamoyl phosphate: step 3/3. This chain is Argininosuccinate lyase, found in Bradyrhizobium sp. (strain BTAi1 / ATCC BAA-1182).